The sequence spans 137 residues: Large ribosomal subunit protein uL16 (137 aa).

The protein belongs to the universal ribosomal protein uL16 family. Part of the 50S ribosomal subunit.

Binds 23S rRNA and is also seen to make contacts with the A and possibly P site tRNAs. The polypeptide is Large ribosomal subunit protein uL16 (Streptococcus uberis (strain ATCC BAA-854 / 0140J)).